Consider the following 129-residue polypeptide: MKYFVVXXALVAAFACIAESKPAESEHELAEVEEENELADLEDAVWLEDLADLSDLEETRGFFGNAWKKIKGKAEKFFRKKAAKIIAKKEGITKEEAEAKVDPMSKKQIKVYLLKHYGKKALQKASEKL.

The signal sequence occupies residues 1–20; it reads MKYFVVXXALVAAFACIAES. The propeptide occupies 21-60; sequence KPAESEHELAEVEEENELADLEDAVWLEDLADLSDLEETR.

It belongs to the cationic peptide 06 (cytoinsectotoxin) family. Expressed by the venom gland.

The protein localises to the secreted. In terms of biological role, insecticidal, cytolytic and antimicrobial peptide. Forms voltage-dependent, ion-permeable channels in membranes. At high concentration causes cell membrane lysis. In Lachesana tarabaevi (Spider), this protein is M-zodatoxin-Lt8l (cit 1-12).